Here is a 325-residue protein sequence, read N- to C-terminus: Cytochrome f (325 aa).

Residues 1-40 form the signal peptide; it reads MSKINLSTMWSSFIKKIAKTILVAIACISLFLTSSPAANA. 4 residues coordinate heme: Tyr-41, Cys-62, Cys-65, and His-66. A helical membrane pass occupies residues 291–311; the sequence is VKWLMAFFALVMLAQIMLVLK.

The protein belongs to the cytochrome f family. As to quaternary structure, the 4 large subunits of the cytochrome b6-f complex are cytochrome b6, subunit IV (17 kDa polypeptide, PetD), cytochrome f and the Rieske protein, while the 4 small subunits are PetG, PetL, PetM and PetN. The complex functions as a dimer. Heme is required as a cofactor.

It localises to the cellular thylakoid membrane. Functionally, component of the cytochrome b6-f complex, which mediates electron transfer between photosystem II (PSII) and photosystem I (PSI), cyclic electron flow around PSI, and state transitions. The chain is Cytochrome f from Trichodesmium erythraeum (strain IMS101).